Consider the following 405-residue polypeptide: Diaminohydroxyphosphoribosylamino-pyrimidine deaminase (405 aa).

The region spanning 256–383 is the CMP/dCMP-type deaminase domain; the sequence is YNHEEYMLKA…DLLKKAGIVV (128 aa). Residue histidine 305 coordinates Zn(2+). Glutamate 307 (proton donor) is an active-site residue. Zn(2+) contacts are provided by cysteine 335 and cysteine 345.

This sequence belongs to the cytidine and deoxycytidylate deaminase family. Requires Zn(2+) as cofactor.

The protein localises to the cytoplasm. It is found in the nucleus. The catalysed reaction is 2,5-diamino-6-hydroxy-4-(5-phosphoribosylamino)-pyrimidine + H2O + H(+) = 5-amino-6-(5-phospho-D-ribosylamino)uracil + NH4(+). It functions in the pathway cofactor biosynthesis; riboflavin biosynthesis; 5-amino-6-(D-ribitylamino)uracil from GTP: step 2/4. Functionally, involved in riboflavin biosynthesis. Converts 2,5-diamino-6-(ribosylamino)-4(3H)-pyrimidinone 5'-phosphate into 5-amino-6-(ribosylamino)-2,4(1H,3H)-pyrimidinedione 5'-phosphate. This is Diaminohydroxyphosphoribosylamino-pyrimidine deaminase from Schizosaccharomyces pombe (strain 972 / ATCC 24843) (Fission yeast).